The sequence spans 331 residues: Ketol-acid reductoisomerase (NADP(+)) (331 aa).

The KARI N-terminal Rossmann domain maps to 2–182; sequence AKLFYDSDAD…GGTRAGILET (181 aa). Residues 25–28, Ser51, Ser53, and 83–86 contribute to the NADP(+) site; these read YGSQ and DEFQ. His108 is an active-site residue. Residue Gly134 coordinates NADP(+). Positions 183–328 constitute a KARI C-terminal knotted domain; sequence NFKEETETDL…KTLRSMFSWL (146 aa). Mg(2+) contacts are provided by Asp191, Glu195, Glu227, and Glu231. Substrate is bound at residue Ser252.

This sequence belongs to the ketol-acid reductoisomerase family. Mg(2+) is required as a cofactor.

The enzyme catalyses (2R)-2,3-dihydroxy-3-methylbutanoate + NADP(+) = (2S)-2-acetolactate + NADPH + H(+). The catalysed reaction is (2R,3R)-2,3-dihydroxy-3-methylpentanoate + NADP(+) = (S)-2-ethyl-2-hydroxy-3-oxobutanoate + NADPH + H(+). Its pathway is amino-acid biosynthesis; L-isoleucine biosynthesis; L-isoleucine from 2-oxobutanoate: step 2/4. The protein operates within amino-acid biosynthesis; L-valine biosynthesis; L-valine from pyruvate: step 2/4. Functionally, involved in the biosynthesis of branched-chain amino acids (BCAA). Catalyzes an alkyl-migration followed by a ketol-acid reduction of (S)-2-acetolactate (S2AL) to yield (R)-2,3-dihydroxy-isovalerate. In the isomerase reaction, S2AL is rearranged via a Mg-dependent methyl migration to produce 3-hydroxy-3-methyl-2-ketobutyrate (HMKB). In the reductase reaction, this 2-ketoacid undergoes a metal-dependent reduction by NADPH to yield (R)-2,3-dihydroxy-isovalerate. In Prochlorococcus marinus (strain NATL1A), this protein is Ketol-acid reductoisomerase (NADP(+)).